We begin with the raw amino-acid sequence, 207 residues long: Fibroblast growth factor 18 (207 aa).

A signal peptide spans 1-27 (MYSAPSACTCLCLHFLLLCFQVQVLVA). Asn39 is a glycosylation site (N-linked (GlcNAc...) asparagine). Cysteines 109 and 127 form a disulfide. An N-linked (GlcNAc...) asparagine glycan is attached at Asn137. A disordered region spans residues 157 to 186 (GRPRKGPKTRENQQDVHFMKRYPKGQPELQ). Basic and acidic residues predominate over residues 164–174 (KTRENQQDVHF).

It belongs to the heparin-binding growth factors family. Interacts with FGFR3 and FGFR4.

The protein resides in the secreted. Functionally, plays an important role in the regulation of cell proliferation, cell differentiation and cell migration. Required for normal ossification and bone development. Stimulates hepatic and intestinal proliferation. This chain is Fibroblast growth factor 18 (FGF18), found in Homo sapiens (Human).